Consider the following 754-residue polypeptide: Disintegrin and metalloproteinase domain-containing protein 32 (754 aa).

Positions 1 to 22 are cleaved as a signal peptide; sequence MLGAMLHTLLLLLLAELGALLA. Serine 23 carries the post-translational modification Phosphoserine. A propeptide spanning residues 23–176 is cleaved from the precursor; the sequence is SGPESQSSFL…TNYGILINKK (154 aa). An N-linked (GlcNAc...) asparagine glycan is attached at asparagine 126. Residues 177–689 lie on the Extracellular side of the membrane; the sequence is PKSPFKNLFP…ERASKNQEKK (513 aa). One can recognise a Peptidase M12B domain in the interval 187–384; it reads LYLEMSIVVD…EGAKCLQNKP (198 aa). Intrachain disulfides connect cysteine 296–cysteine 379, cysteine 338–cysteine 363, cysteine 340–cysteine 345, and cysteine 454–cysteine 475. N-linked (GlcNAc...) asparagine glycans are attached at residues asparagine 362, asparagine 469, asparagine 570, and asparagine 571. The Disintegrin domain maps to 391 to 483; that stretch reads AAVCGNGKVE…NCPPDVTINN (93 aa). The EGF-like domain maps to 628–660; it reads QSKTCSSKCHGNGVCNSHGVCHCNAGYSPPNCQ. Disulfide bonds link cysteine 632-cysteine 642, cysteine 636-cysteine 648, and cysteine 650-cysteine 659. Residues 690 to 710 form a helical membrane-spanning segment; the sequence is WLLSLYIVLIILASVFLIGTG. At 711 to 754 the chain is on the cytoplasmic side; sequence WKGLKQCGSKEEESMSSESKSEDSTYTYVSRSTSETSSMTSTSS. Residues 720–733 show a composition bias toward basic and acidic residues; sequence KEEESMSSESKSED. Residues 720–754 form a disordered region; it reads KEEESMSSESKSEDSTYTYVSRSTSETSSMTSTSS. Residues 734–754 are compositionally biased toward low complexity; that stretch reads STYTYVSRSTSETSSMTSTSS.

As to expression, expressed in sperm (at protein level). Highly expressed in the testis and weakly expressed in the epididymis, brain and heart.

It is found in the membrane. In terms of biological role, may play a role in sperm development and fertilization This is a non-catalytic metalloprotease-like protein. This Mus musculus (Mouse) protein is Disintegrin and metalloproteinase domain-containing protein 32.